The primary structure comprises 611 residues: V-type proton ATPase catalytic subunit A (611 aa).

244 to 251 (GAFGCGKT) contacts ATP.

The protein belongs to the ATPase alpha/beta chains family. V-ATPase is a heteromultimeric enzyme made up of two complexes: the ATP-hydrolytic V1 complex and the proton translocation V0 complex. The V1 complex consists of three catalytic AB heterodimers that form a heterohexamer, three peripheral stalks each consisting of EG heterodimers, one central rotor including subunits D and F, and the regulatory subunits C and H. The proton translocation complex V0 consists of the proton transport subunit a, a ring of proteolipid subunits c9c'', rotary subunit d and subunit e.

It localises to the cell membrane. The protein localises to the vacuole. Its subcellular location is the vesicle. The enzyme catalyses ATP + H2O + 4 H(+)(in) = ADP + phosphate + 5 H(+)(out). Its activity is regulated as follows. ATP hydrolysis occurs at the interface between the nucleotide-binding domains of subunits A and B. ATP hydrolysis triggers a conformational change in the subunits D and F, which induces a shift of subunit d. The c-ring is subsequently rotated and results in a continuous proton translocation across the membrane. Functionally, catalytic subunit of the V1 complex of vacuolar(H+)-ATPase (V-ATPase), a multisubunit enzyme composed of a peripheral complex (V1) that hydrolyzes ATP and a membrane integral complex (V0) that translocates protons. V-ATPase is responsible for acidifying and maintaining the pH of intracellular compartments and in some cell types, is targeted to the plasma membrane, where it is responsible for acidifying the extracellular environment. During the trophozoite stage, involved in the acidification of the extracellular space next to the cell membrane. In Plasmodium falciparum (isolate 3D7), this protein is V-type proton ATPase catalytic subunit A.